The chain runs to 145 residues: Cell wall teichoic acid glycosylation protein GtcA (145 aa).

The next 4 helical transmembrane spans lie at 21–41, 52–69, 96–116, and 121–141; these read ILMY…TFWL, IANT…YFSN, FLTY…LGIN, and KIWT…WIIF.

This sequence belongs to the GtrA family.

Its subcellular location is the cell membrane. Functionally, involved in the decoration of cell wall teichoic acid with galactose and glucose. This Listeria innocua serovar 6a (strain ATCC BAA-680 / CLIP 11262) protein is Cell wall teichoic acid glycosylation protein GtcA (gtcA).